Here is a 529-residue protein sequence, read N- to C-terminus: uncharacterized protein (529 aa).

Residues 354 to 373 (FHVASFPWISWAILGSYIML) traverse the membrane as a helical segment.

It localises to the host membrane. This is an uncharacterized protein from Acidianus convivator (ATV).